The following is a 549-amino-acid chain: Glucose-6-phosphate isomerase (549 aa).

Catalysis depends on E355, which acts as the Proton donor. Catalysis depends on residues H386 and K514.

The protein belongs to the GPI family.

The protein localises to the cytoplasm. It carries out the reaction alpha-D-glucose 6-phosphate = beta-D-fructose 6-phosphate. Its pathway is carbohydrate biosynthesis; gluconeogenesis. The protein operates within carbohydrate degradation; glycolysis; D-glyceraldehyde 3-phosphate and glycerone phosphate from D-glucose: step 2/4. Functionally, catalyzes the reversible isomerization of glucose-6-phosphate to fructose-6-phosphate. The chain is Glucose-6-phosphate isomerase from Salmonella typhi.